The following is a 208-amino-acid chain: MTPGKFITLEGGEGVGKSTNVDFVVSRLRARGLKVVATREPGGTAFGEAVREIFLRQDTVRPEAELLLLFAARVHHLREVIEPALRRGDWVVCDRFTDASYAYQGAGRGIAPGVIDFLRDWIQAGLRPDLTLLLDAPVDTGLKRAHQRSGPDRLEREDSAFFARVREGYLALARAEPGRIRVIDADRPLALVQTAIATQVDSLLAGHV.

11–18 serves as a coordination point for ATP; sequence GGEGVGKS.

Belongs to the thymidylate kinase family.

The enzyme catalyses dTMP + ATP = dTDP + ADP. In terms of biological role, phosphorylation of dTMP to form dTDP in both de novo and salvage pathways of dTTP synthesis. This is Thymidylate kinase from Methylococcus capsulatus (strain ATCC 33009 / NCIMB 11132 / Bath).